Reading from the N-terminus, the 601-residue chain is Protein nubbin (601 aa).

Residues 1 to 25 show a composition bias toward basic and acidic residues; the sequence is MVMSELRWHTASPEDNKNSLKRDLL. Disordered regions lie at residues 1-32, 49-94, 121-158, 351-425, and 581-601; these read MVMS…PTSA, SRSP…AKRQ, KQEE…ATAS, PASS…ETTD, and INPS…YMMH. A compositionally biased stretch (low complexity) spans 49 to 68; the sequence is SRSPSPLQSNASDCDDNNSS. Residues 135-157 show a composition bias toward polar residues; the sequence is NLTSDNSRHSTQSPSNSVKSATA. Residues 384 to 415 show a composition bias toward low complexity; the sequence is TPSTPTSGTQMSQGTTTPQPKTVASAAAARAA. The 75-residue stretch at 421–495 folds into the POU-specific domain; that stretch reads EETTDLEELE…LLQKWLDDAD (75 aa). The homeobox DNA-binding region spans 523–582; it reads RRKKRTSIETTIRGALEKAFLANQKPTSEEITQLADRLSMEKEVVRVWFCNRRQKEKRIN. Residues 591–601 are compositionally biased toward acidic residues; it reads ADDDESSYMMH.

Belongs to the POU transcription factor family. Class-2 subfamily. In terms of tissue distribution, initial expression in cellular blastoderm stage, then in ectodermal stripes during germband extension. Broad expression in the neuroectoderm followed by limitation to discrete subsets of CNS cells, and expression in specific PNS neurons and support cells.

Its subcellular location is the nucleus. In terms of biological role, DNA-binding regulatory protein implicated in early development. Involved in neuronal cell fate decision. Repressed directly or indirectly by the BX-C homeotic proteins. The sequence is that of Protein nubbin (nub) from Drosophila melanogaster (Fruit fly).